A 151-amino-acid polypeptide reads, in one-letter code: Transcriptional regulator SyrB (151 aa).

The segment at 1–61 (MADESNTGPV…RYSEQERNDK (61 aa)) is disordered. Over residues 33-48 (PQKAAAEPAQPKAPAA) the composition is skewed to low complexity. Basic and acidic residues predominate over residues 52–61 (RYSEQERNDK).

The protein belongs to the SyrB family.

Functionally, responsible for the repression of SyrM activity. This is Transcriptional regulator SyrB (syrB) from Rhizobium meliloti (strain 1021) (Ensifer meliloti).